The sequence spans 588 residues: Zinc finger protein 599 (588 aa).

One can recognise a KRAB domain in the interval 9-80; that stretch reads VSFEDVVVTF…KRGLSQSTCA (72 aa). 14 consecutive C2H2-type zinc fingers follow at residues 199–221, 227–249, 255–277, 283–305, 311–333, 339–361, 367–389, 395–417, 423–445, 451–473, 479–501, 507–529, 535–557, and 563–585; these read YTCT…QQIH, YECN…MRLH, YKCI…QRIH, YECK…NMTH, FLCK…MRIH, YECG…NVTH, YECG…KRTH, FECK…MRIH, YECS…NRTH, LECK…MRIH, YVCR…NRIH, FECK…MRTH, and FECN…RKIH.

This sequence belongs to the krueppel C2H2-type zinc-finger protein family.

It is found in the nucleus. In terms of biological role, may be involved in transcriptional regulation. This Homo sapiens (Human) protein is Zinc finger protein 599 (ZNF599).